The sequence spans 295 residues: Zygote arrest protein 1.S (295 aa).

Disordered regions lie at residues 80–115 and 144–186; these read SVQC…TKTV and EKGE…APAQ. Residues 144–176 show a composition bias toward basic and acidic residues; the sequence is EKGEAVRSEGSEGGRQEGKQGDGEIKEQMKMDK. A 3CxxC-type zinc finger spans residues 197–280; that stretch reads KYGYYHCKDC…RQDLCGRCKG (84 aa).

The protein belongs to the ZAR1 family. Ovary. Also expressed in lung and muscle.

The protein localises to the cytoplasm. It is found in the cytoplasmic ribonucleoprotein granule. Its function is as follows. mRNA-binding protein required for maternal mRNA storage, translation and degradation during oocyte maturation. Probably promotes formation of some phase-separated membraneless compartment that stores maternal mRNAs in oocytes: acts by undergoing liquid-liquid phase separation upon binding to maternal mRNAs. Binds to the 3'-UTR of maternal mRNAs in immature oocytes, inhibiting their translation. This Xenopus laevis (African clawed frog) protein is Zygote arrest protein 1.S (zar1.S).